Reading from the N-terminus, the 381-residue chain is Guanine nucleotide-binding protein G(olf) subunit alpha (381 aa).

Residues 1–25 (MGCLGNSSKTAEDQGVDEKERREAN) are disordered. Gly2 carries N-palmitoyl glycine lipidation. Cys3 carries the S-palmitoyl cysteine lipid modification. The segment covering 10–25 (TAEDQGVDEKERREAN) has biased composition (basic and acidic residues). The G-alpha domain maps to 41–381 (ATHRLLLLGA…RMHLKQYELL (341 aa)). The interval 44 to 57 (RLLLLGAGESGKST) is G1 motif. Positions 52, 53, 54, 55, 56, and 57 each coordinate GTP. Ser56 contributes to the Mg(2+) binding site. Thr178 carries the phosphothreonine modification. Positions 183–191 (DLLRCRVLT) are G2 motif. The GTP site is built by Leu185, Arg186, and Thr191. The Mg(2+) site is built by Thr191 and Asp210. Positions 206 to 215 (FHMFDVGGQR) are G3 motif. Residues Gly213, Asn279, Lys280, Asp282, and Ala353 each coordinate GTP. Positions 275–282 (ILFLNKQD) are G4 motif. The interval 351-356 (TCAVDT) is G5 motif.

Belongs to the G-alpha family. G(s) subfamily. In terms of assembly, g proteins are composed of 3 units; alpha, beta and gamma. The alpha chain contains the guanine nucleotide binding site. Interacts with GAS2L2. Interacts (GDP-bound form) with RIC8B (via C-terminus); promoting GNAL folding and association with the plasma membrane.

The protein localises to the cell membrane. It carries out the reaction GTP + H2O = GDP + phosphate + H(+). Its function is as follows. Guanine nucleotide-binding protein (G protein) involved as transducer in olfactory signal transduction controlled by G protein-coupled receptors (GPCRs). Contains the guanine nucleotide binding site and alternates between an active, GTP-bound state and an inactive, GDP-bound state. Signaling by an activated GPCR promotes GDP release and GTP binding. The alpha subunit has a low GTPase activity that converts bound GTP to GDP, thereby terminating the signal. Both GDP release and GTP hydrolysis are modulated by numerous regulatory proteins. GNAL/G(olf) alpha specifically mediates olfactory signal transduction within the olfactory neuroepithelium and the basal ganglia following GPCRs activation. Acts by promoting the specific activation of adenylyl cyclase ADCY3, resulting in increased levels of the signaling molecule cAMP. The polypeptide is Guanine nucleotide-binding protein G(olf) subunit alpha (Rattus norvegicus (Rat)).